Here is a 265-residue protein sequence, read N- to C-terminus: O-methyltransferase NEC2 (265 aa).

This sequence belongs to the methyltransferase superfamily.

It catalyses the reaction desmethylnectriapyrone + S-adenosyl-L-methionine = nectriapyrone + S-adenosyl-L-homocysteine + H(+). O-methyltransferase; part of the gene cluster that mediates the biosynthesis of nectriapyrone and its analogs phomopyrone A, acropyrone and zaepyrone. The nectriapyrone biosynthetic gene cluster consists of two genes, the highly reducing polyketide synthase NEC1 that produces a demethylated analog of nectriapyrone from one unit of acetyl-CoA and one unit of malonyl-CoA; and the O-methyltransferase NEC2 that further methylates the NEC1 product to yield nectriapyrone. Nectriapyrone is further hydrolyzed to nectriapyrone D, also known as gulypyrone B, by an unidentified hydrolase localized outside the nectriapyrone cluster. This is O-methyltransferase NEC2 from Pyricularia oryzae (strain 70-15 / ATCC MYA-4617 / FGSC 8958) (Rice blast fungus).